Consider the following 361-residue polypeptide: MKPSIHSLTHQTMQEWVLEQGEKKFRADQIWEWLYRKRVQSFEEMTNLSKDLIAKLNDQFVVNPLKQGIVQESADGTVKYLFELPDGMLIETVLMCQHYGLSVCVTTQVGCNIGCTFCASGLIKKQRDLNNGEIVAQIMLVQKYFDERGQDERISHIVVMGIGEPFDNYNNVLNFFRTINDDKGMAIGARHITVSISGLAHKIRDFADEGVQVNLAVSLHAPNNELRSSIMKINRAFPIEKLFAAIEYYIETTNRRVTFEYIMLNEVNDGVEQALELAELLKNIKKSSYVNLIPYNPVSEHDQYSRSPKERVLAFYDTLKKKGGNCVVRQEHGTDIDAACGQLLFNTMKRDRQKAVAAVNP.

The Proton acceptor role is filled by glutamate 91. The Radical SAM core domain occupies 97 to 329; the sequence is QHYGLSVCVT…KKKGGNCVVR (233 aa). Cysteine 104 and cysteine 340 are disulfide-bonded. [4Fe-4S] cluster is bound by residues cysteine 111, cysteine 115, and cysteine 118. S-adenosyl-L-methionine contacts are provided by residues 163–164, serine 195, 218–220, and asparagine 296; these read GE and SLH. Catalysis depends on cysteine 340, which acts as the S-methylcysteine intermediate.

Belongs to the radical SAM superfamily. RlmN family. It depends on [4Fe-4S] cluster as a cofactor.

The protein resides in the cytoplasm. It carries out the reaction adenosine(2503) in 23S rRNA + 2 reduced [2Fe-2S]-[ferredoxin] + 2 S-adenosyl-L-methionine = 2-methyladenosine(2503) in 23S rRNA + 5'-deoxyadenosine + L-methionine + 2 oxidized [2Fe-2S]-[ferredoxin] + S-adenosyl-L-homocysteine. The enzyme catalyses adenosine(37) in tRNA + 2 reduced [2Fe-2S]-[ferredoxin] + 2 S-adenosyl-L-methionine = 2-methyladenosine(37) in tRNA + 5'-deoxyadenosine + L-methionine + 2 oxidized [2Fe-2S]-[ferredoxin] + S-adenosyl-L-homocysteine. In terms of biological role, specifically methylates position 2 of adenine 2503 in 23S rRNA and position 2 of adenine 37 in tRNAs. The polypeptide is Probable dual-specificity RNA methyltransferase RlmN (Streptococcus pneumoniae (strain P1031)).